A 249-amino-acid chain; its full sequence is Myelin protein P0 (249 aa).

A signal peptide spans 1 to 29 (MALGAIGDGRLLLLLVGLLSASGPSPTLA). The region spanning 30–143 (IHVYTPREVY…DIVGKSSQVT (114 aa)) is the Ig-like V-type domain. The Extracellular segment spans residues 30–153 (IHVYTPREVY…LYVLEKVPTR (124 aa)). An intrachain disulfide couples Cys-50 to Cys-127. Asn-122 carries an N-linked (GlcNAc...) asparagine glycan. The helical transmembrane segment at 154–179 (YGVVLGSIIGGVLLLVALLVAVVYLV) threads the bilayer. Residues 180–249 (RFCWLRRQAV…APGEARKDKK (70 aa)) lie on the Cytoplasmic side of the membrane. The disordered stretch occupies residues 227–249 (RSAKAAAEKKSKGAPGEARKDKK).

The protein belongs to the myelin P0 protein family. Found only in peripheral nervous system Schwann cells.

Its subcellular location is the cell membrane. Functionally, is an adhesion molecule necessary for normal myelination in the peripheral nervous system. It mediates adhesion between adjacent myelin wraps and ultimately drives myelin compaction. The protein is Myelin protein P0 (MPZ) of Gallus gallus (Chicken).